A 323-amino-acid chain; its full sequence is tRNA uridine(34) hydroxylase (323 aa).

One can recognise a Rhodanese domain in the interval 127 to 221 (QDENTVVLDA…YGQDPEVQGD (95 aa)). The Cysteine persulfide intermediate role is filled by Cys-181.

Belongs to the TrhO family.

The catalysed reaction is uridine(34) in tRNA + AH2 + O2 = 5-hydroxyuridine(34) in tRNA + A + H2O. Its function is as follows. Catalyzes oxygen-dependent 5-hydroxyuridine (ho5U) modification at position 34 in tRNAs. In Oceanobacillus iheyensis (strain DSM 14371 / CIP 107618 / JCM 11309 / KCTC 3954 / HTE831), this protein is tRNA uridine(34) hydroxylase.